Reading from the N-terminus, the 259-residue chain is 3-deoxy-manno-octulosonate cytidylyltransferase (259 aa).

It belongs to the KdsB family.

The protein localises to the cytoplasm. It carries out the reaction 3-deoxy-alpha-D-manno-oct-2-ulosonate + CTP = CMP-3-deoxy-beta-D-manno-octulosonate + diphosphate. Its pathway is nucleotide-sugar biosynthesis; CMP-3-deoxy-D-manno-octulosonate biosynthesis; CMP-3-deoxy-D-manno-octulosonate from 3-deoxy-D-manno-octulosonate and CTP: step 1/1. The protein operates within bacterial outer membrane biogenesis; lipopolysaccharide biosynthesis. Functionally, activates KDO (a required 8-carbon sugar) for incorporation into bacterial lipopolysaccharide in Gram-negative bacteria. The chain is 3-deoxy-manno-octulosonate cytidylyltransferase from Xanthomonas oryzae pv. oryzae (strain KACC10331 / KXO85).